Consider the following 941-residue polypeptide: Endoplasmic reticulum aminopeptidase 1 (941 aa).

M1 is a topological domain (cytoplasmic). A helical; Signal-anchor for type II membrane protein transmembrane segment spans residues 2 to 21 (VFLPLKWSLATMSFLLSSLL). Residues 22-941 (ALLTVSTPSW…WLQSEKLERM (920 aa)) are Lumenal-facing. N-linked (GlcNAc...) asparagine glycosylation is found at N70 and N154. Residues E183 and 317–321 (GAMEN) contribute to the substrate site. H353 contributes to the Zn(2+) binding site. The Proton acceptor role is filled by E354. 2 residues coordinate Zn(2+): H357 and E376. Intrachain disulfides connect C404/C443 and C736/C743. N414 is a glycosylation site (N-linked (GlcNAc...) asparagine). Residues N760 and N901 are each glycosylated (N-linked (GlcNAc...) asparagine).

Belongs to the peptidase M1 family. Monomer. May also exist as a heterodimer; with ERAP2. Interacts with RBMX. Requires Zn(2+) as cofactor. In terms of processing, N-glycosylated. In terms of tissue distribution, ubiquitous.

Its subcellular location is the endoplasmic reticulum membrane. Functionally, aminopeptidase that plays a central role in peptide trimming, a step required for the generation of most HLA class I-binding peptides. Peptide trimming is essential to customize longer precursor peptides to fit them to the correct length required for presentation on MHC class I molecules. Strongly prefers substrates 9-16 residues long. Rapidly degrades 13-mer to a 9-mer and then stops. Preferentially hydrolyzes the residue Leu and peptides with a hydrophobic C-terminus, while it has weak activity toward peptides with charged C-terminus. May play a role in the inactivation of peptide hormones. May be involved in the regulation of blood pressure through the inactivation of angiotensin II and/or the generation of bradykinin in the kidney. The chain is Endoplasmic reticulum aminopeptidase 1 (ERAP1) from Homo sapiens (Human).